The primary structure comprises 314 residues: Putative steroid dehydrogenase 1 (314 aa).

NADP(+) is bound at residue 47–76 (ASWAVVTGATDGIGKSYSFELAKRGFNVYI). Residue Tyr202 is part of the active site.

This sequence belongs to the short-chain dehydrogenases/reductases (SDR) family. 17-beta-HSD 3 subfamily.

This chain is Putative steroid dehydrogenase 1 (stdh-1), found in Caenorhabditis elegans.